The primary structure comprises 418 residues: Putative ion-transport protein YfeO (418 aa).

12 helical membrane-spanning segments follow: residues 10-30, 54-74, 99-119, 120-140, 149-169, 186-206, 223-243, 258-278, 300-320, 322-342, 343-363, and 371-391; these read LLLSLPAVAIGIASSLILIMV, DSPLWIIGVLTLTGIAVGLVI, ALPGLIVALILGLAGGVSLGP, EHPIMTVNIALAVAIGARLLP, ILASAGTIGALFGTPVAAALI, LFAPLMAAAAGALTTGLFFHP, ILSGAIVAAIAIAAGMVAVWC, VFVLGIGGLILGILGVIGGPV, DYFLLAVIKLAALVVAAASGF, GGRIFPAVFVGVALGLMLHEH, VPAVPAAITVSCAILGIVLVV, and LFMAAVVVPNTTLLPLLCIVM.

Belongs to the chloride channel (TC 2.A.49) family.

The protein localises to the cell membrane. This is Putative ion-transport protein YfeO from Escherichia coli O45:K1 (strain S88 / ExPEC).